A 366-amino-acid polypeptide reads, in one-letter code: 3-dehydroquinate synthase (366 aa).

NAD(+) is bound by residues 71–76 (DGEKYK), 105–109 (GVIGD), 129–130 (TT), Lys-142, Lys-151, and 169–172 (TLQT). Glu-184, His-247, and His-264 together coordinate Zn(2+).

Belongs to the sugar phosphate cyclases superfamily. Dehydroquinate synthase family. Requires Co(2+) as cofactor. The cofactor is Zn(2+). It depends on NAD(+) as a cofactor.

Its subcellular location is the cytoplasm. The enzyme catalyses 7-phospho-2-dehydro-3-deoxy-D-arabino-heptonate = 3-dehydroquinate + phosphate. It functions in the pathway metabolic intermediate biosynthesis; chorismate biosynthesis; chorismate from D-erythrose 4-phosphate and phosphoenolpyruvate: step 2/7. In terms of biological role, catalyzes the conversion of 3-deoxy-D-arabino-heptulosonate 7-phosphate (DAHP) to dehydroquinate (DHQ). The protein is 3-dehydroquinate synthase of Actinobacillus pleuropneumoniae serotype 5b (strain L20).